A 420-amino-acid polypeptide reads, in one-letter code: uncharacterized protein (420 aa).

Disordered regions lie at residues Arg84–Glu103 and Ser122–Ser211. Over residues Ser85–Glu103 the composition is skewed to polar residues. The span at Ser184 to Lys199 shows a compositional bias: basic and acidic residues. Coiled coils occupy residues Thr265 to Asn310 and Leu345 to Glu374. Over residues Lys399 to Ala408 the composition is skewed to polar residues. A disordered region spans residues Lys399–Asn420. Positions Ser410 to Asn420 are enriched in basic residues.

This is an uncharacterized protein from Caenorhabditis elegans.